The chain runs to 484 residues: Serine hydroxymethyltransferase, cytosolic (484 aa).

At A2 the chain carries N-acetylalanine. N6 carries the post-translational modification Deamidated asparagine; alternate. Positions 6–7 (NG) form a cross-link, isoaspartyl glycine isopeptide (Asn-Gly); alternate. Catalysis depends on C204, which acts as the Nucleophile. Residue H256 is the Proton donor of the active site. K257 carries the post-translational modification N6-(pyridoxal phosphate)lysine.

The protein belongs to the SHMT family. Homotetramer. Identified in complex with ABRAXAS2 and the other subunits of the BRISC complex, at least composed of ABRAXAS2, BRCC3/BRCC36, BABAM2 and BABAM1/NBA1. Pyridoxal 5'-phosphate is required as a cofactor. Post-translationally, deamidation of asparagine produces alternatively aspartate or isoaspartate, which in turn can be converted to aspartate through carboxylmethylation/demethylation.

It is found in the cytoplasm. The catalysed reaction is (6R)-5,10-methylene-5,6,7,8-tetrahydrofolate + glycine + H2O = (6S)-5,6,7,8-tetrahydrofolate + L-serine. It participates in one-carbon metabolism; tetrahydrofolate interconversion. Its function is as follows. Interconversion of serine and glycine. The chain is Serine hydroxymethyltransferase, cytosolic (SHMT1) from Oryctolagus cuniculus (Rabbit).